A 385-amino-acid polypeptide reads, in one-letter code: UPF0744 protein YSC83 (385 aa).

Belongs to the UPF0744 family.

The protein localises to the mitochondrion outer membrane. This chain is UPF0744 protein YSC83 (YSC83), found in Saccharomyces cerevisiae (strain ATCC 204508 / S288c) (Baker's yeast).